Consider the following 339-residue polypeptide: Methylthioribose-1-phosphate isomerase (339 aa).

Residues 50–52, Arg84, and Gln186 contribute to the substrate site; that span reads RGA. Residue Asp227 is the Proton donor of the active site. 237-238 contributes to the substrate binding site; the sequence is NK.

The protein belongs to the eIF-2B alpha/beta/delta subunits family. MtnA subfamily.

It carries out the reaction 5-(methylsulfanyl)-alpha-D-ribose 1-phosphate = 5-(methylsulfanyl)-D-ribulose 1-phosphate. It participates in amino-acid biosynthesis; L-methionine biosynthesis via salvage pathway; L-methionine from S-methyl-5-thio-alpha-D-ribose 1-phosphate: step 1/6. Its function is as follows. Catalyzes the interconversion of methylthioribose-1-phosphate (MTR-1-P) into methylthioribulose-1-phosphate (MTRu-1-P). In Sulfurihydrogenibium sp. (strain YO3AOP1), this protein is Methylthioribose-1-phosphate isomerase.